The primary structure comprises 149 residues: UPF0260 protein Avin_32930 (149 aa).

The protein belongs to the UPF0260 family.

This Azotobacter vinelandii (strain DJ / ATCC BAA-1303) protein is UPF0260 protein Avin_32930.